We begin with the raw amino-acid sequence, 331 residues long: Phosphoenolpyruvate transferase (331 aa).

D63 is a 7,8-didemethyl-8-hydroxy-5-deazariboflavin binding site.

The protein belongs to the CofD family. In terms of assembly, homodimer. The cofactor is Mg(2+).

The catalysed reaction is enolpyruvoyl-2-diphospho-5'-guanosine + 7,8-didemethyl-8-hydroxy-5-deazariboflavin = dehydro coenzyme F420-0 + GMP + H(+). The protein operates within cofactor biosynthesis; coenzyme F420 biosynthesis. In terms of biological role, catalyzes the transfer of the phosphoenolpyruvate moiety from enoylpyruvoyl-2-diphospho-5'-guanosine (EPPG) to 7,8-didemethyl-8-hydroxy-5-deazariboflavin (FO) with the formation of dehydro coenzyme F420-0 and GMP. The polypeptide is Phosphoenolpyruvate transferase (Mycobacterium bovis (strain ATCC BAA-935 / AF2122/97)).